The primary structure comprises 557 residues: Glutamyl-tRNA(Gln) amidotransferase subunit B, mitochondrial (557 aa).

Residues 1–41 constitute a mitochondrion transit peptide; the sequence is MAAPMLRWGCRGRRWAFARVDGGSCHRRGAPTGSTSNQIRG. Positions 26-45 are disordered; the sequence is HRRGAPTGSTSNQIRGESSV. Polar residues predominate over residues 32 to 45; the sequence is TGSTSNQIRGESSV. An N6-succinyllysine modification is found at Lys-529.

The protein belongs to the GatB/GatE family. GatB subfamily. As to quaternary structure, subunit of the heterotrimeric GatCAB amidotransferase (AdT) complex, composed of A (QRSL1), B (GATB) and C (GATC) subunits. In terms of tissue distribution, predominantly expressed in tissues characterized by high rates of oxidative phosphorylation (OxPhos), including muscle and heart.

The protein resides in the mitochondrion. The enzyme catalyses L-glutamyl-tRNA(Gln) + L-glutamine + ATP + H2O = L-glutaminyl-tRNA(Gln) + L-glutamate + ADP + phosphate + H(+). Functionally, allows the formation of correctly charged Gln-tRNA(Gln) through the transamidation of misacylated Glu-tRNA(Gln) in the mitochondria. The reaction takes place in the presence of glutamine and ATP through an activated gamma-phospho-Glu-tRNA(Gln). The chain is Glutamyl-tRNA(Gln) amidotransferase subunit B, mitochondrial from Homo sapiens (Human).